The primary structure comprises 281 residues: ATP phosphoribosyltransferase (281 aa).

Belongs to the ATP phosphoribosyltransferase family. Long subfamily. Requires Mg(2+) as cofactor.

It localises to the cytoplasm. The catalysed reaction is 1-(5-phospho-beta-D-ribosyl)-ATP + diphosphate = 5-phospho-alpha-D-ribose 1-diphosphate + ATP. Its pathway is amino-acid biosynthesis; L-histidine biosynthesis; L-histidine from 5-phospho-alpha-D-ribose 1-diphosphate: step 1/9. Its activity is regulated as follows. Feedback inhibited by histidine. Its function is as follows. Catalyzes the condensation of ATP and 5-phosphoribose 1-diphosphate to form N'-(5'-phosphoribosyl)-ATP (PR-ATP). Has a crucial role in the pathway because the rate of histidine biosynthesis seems to be controlled primarily by regulation of HisG enzymatic activity. This is ATP phosphoribosyltransferase from Corynebacterium diphtheriae (strain ATCC 700971 / NCTC 13129 / Biotype gravis).